Here is a 157-residue protein sequence, read N- to C-terminus: Protein Smg homolog (157 aa).

The protein belongs to the Smg family.

The protein is Protein Smg homolog of Aeromonas salmonicida (strain A449).